Reading from the N-terminus, the 293-residue chain is HTH-type transcriptional regulator HdfR (293 aa).

An HTH lysR-type domain is found at 1-58 (MDTELLKTFLEVSRTRHFGRAAESLYLTQSAVSFRIRQLENQLGANLFTRHRNNIRLT). A DNA-binding region (H-T-H motif) is located at residues 18–37 (FGRAAESLYLTQSAVSFRIR).

It belongs to the LysR transcriptional regulatory family.

Its function is as follows. Negatively regulates the transcription of the flagellar master operon flhDC by binding to the upstream region of the operon. This is HTH-type transcriptional regulator HdfR from Yersinia pseudotuberculosis serotype O:1b (strain IP 31758).